A 203-amino-acid polypeptide reads, in one-letter code: Outer-membrane lipoprotein LolB (203 aa).

Residues 1-18 form the signal peptide; it reads MYRLLCLLALLTAAGLMG. Cys19 is lipidated: N-palmitoyl cysteine. Cys19 is lipidated: S-diacylglycerol cysteine.

The protein belongs to the LolB family. Monomer.

The protein resides in the cell outer membrane. Functionally, plays a critical role in the incorporation of lipoproteins in the outer membrane after they are released by the LolA protein. In Cellvibrio japonicus (strain Ueda107) (Pseudomonas fluorescens subsp. cellulosa), this protein is Outer-membrane lipoprotein LolB.